The following is a 429-amino-acid chain: 3-phosphoshikimate 1-carboxyvinyltransferase (429 aa).

3-phosphoshikimate is bound by residues lysine 23, serine 24, and arginine 28. Position 23 (lysine 23) interacts with phosphoenolpyruvate. Phosphoenolpyruvate contacts are provided by glycine 95 and arginine 123. The 3-phosphoshikimate site is built by serine 168, glutamine 170, aspartate 316, and lysine 343. Position 170 (glutamine 170) interacts with phosphoenolpyruvate. The active-site Proton acceptor is the aspartate 316. Phosphoenolpyruvate contacts are provided by arginine 347 and arginine 389.

Belongs to the EPSP synthase family. Monomer.

Its subcellular location is the cytoplasm. It catalyses the reaction 3-phosphoshikimate + phosphoenolpyruvate = 5-O-(1-carboxyvinyl)-3-phosphoshikimate + phosphate. Its pathway is metabolic intermediate biosynthesis; chorismate biosynthesis; chorismate from D-erythrose 4-phosphate and phosphoenolpyruvate: step 6/7. Catalyzes the transfer of the enolpyruvyl moiety of phosphoenolpyruvate (PEP) to the 5-hydroxyl of shikimate-3-phosphate (S3P) to produce enolpyruvyl shikimate-3-phosphate and inorganic phosphate. This is 3-phosphoshikimate 1-carboxyvinyltransferase from Bacillus cereus (strain G9842).